The following is a 156-amino-acid chain: Small ribosomal subunit protein bS6 (156 aa).

The segment at 98-156 (GHDFRDQRSHHGQAGEFRKREPQQKSKEQSEFSKEKKSFSKSVTKKTVVSKPKETKEEK) is disordered. Positions 113-135 (EFRKREPQQKSKEQSEFSKEKKS) are enriched in basic and acidic residues. Over residues 137 to 147 (SKSVTKKTVVS) the composition is skewed to low complexity.

It belongs to the bacterial ribosomal protein bS6 family.

Functionally, binds together with bS18 to 16S ribosomal RNA. In Mycoplasmopsis synoviae (strain 53) (Mycoplasma synoviae), this protein is Small ribosomal subunit protein bS6.